Here is a 273-residue protein sequence, read N- to C-terminus: 4-hydroxy-tetrahydrodipicolinate reductase (273 aa).

Residues 8-13 (GACGRM), glutamate 34, 102-104 (GTT), and 128-131 (APNM) each bind NAD(+). Catalysis depends on histidine 160, which acts as the Proton donor/acceptor. Histidine 161 is a binding site for (S)-2,3,4,5-tetrahydrodipicolinate. Lysine 164 (proton donor) is an active-site residue. 170–171 (GT) provides a ligand contact to (S)-2,3,4,5-tetrahydrodipicolinate.

The protein belongs to the DapB family.

The protein localises to the cytoplasm. It catalyses the reaction (S)-2,3,4,5-tetrahydrodipicolinate + NAD(+) + H2O = (2S,4S)-4-hydroxy-2,3,4,5-tetrahydrodipicolinate + NADH + H(+). The enzyme catalyses (S)-2,3,4,5-tetrahydrodipicolinate + NADP(+) + H2O = (2S,4S)-4-hydroxy-2,3,4,5-tetrahydrodipicolinate + NADPH + H(+). The protein operates within amino-acid biosynthesis; L-lysine biosynthesis via DAP pathway; (S)-tetrahydrodipicolinate from L-aspartate: step 4/4. Its function is as follows. Catalyzes the conversion of 4-hydroxy-tetrahydrodipicolinate (HTPA) to tetrahydrodipicolinate. This Methanothermobacter thermautotrophicus (strain ATCC 29096 / DSM 1053 / JCM 10044 / NBRC 100330 / Delta H) (Methanobacterium thermoautotrophicum) protein is 4-hydroxy-tetrahydrodipicolinate reductase.